We begin with the raw amino-acid sequence, 642 residues long: tRNA uridine 5-carboxymethylaminomethyl modification enzyme MnmG (642 aa).

FAD is bound by residues 12-17 (GAGHAG), valine 124, and serine 179. 272–286 (GPRYCPSIEDKITRF) serves as a coordination point for NAD(+). Glutamine 369 provides a ligand contact to FAD.

The protein belongs to the MnmG family. In terms of assembly, homodimer. Heterotetramer of two MnmE and two MnmG subunits. The cofactor is FAD.

Its subcellular location is the cytoplasm. In terms of biological role, NAD-binding protein involved in the addition of a carboxymethylaminomethyl (cmnm) group at the wobble position (U34) of certain tRNAs, forming tRNA-cmnm(5)s(2)U34. The polypeptide is tRNA uridine 5-carboxymethylaminomethyl modification enzyme MnmG (Bdellovibrio bacteriovorus (strain ATCC 15356 / DSM 50701 / NCIMB 9529 / HD100)).